Here is a 416-residue protein sequence, read N- to C-terminus: Casein kinase I isoform epsilon (416 aa).

One can recognise a Protein kinase domain in the interval 9 to 277 (YRLGRKIGSG…YLRQLFRNLF (269 aa)). Residues 15 to 23 (IGSGSFGDI) and lysine 38 each bind ATP. Residue aspartate 128 is the Proton acceptor of the active site. The segment covering 301-318 (PEDMDRERREHEREERMG) has biased composition (basic and acidic residues). The interval 301–416 (PEDMDRERRE…TSVPFDHLGK (116 aa)) is disordered. A compositionally biased stretch (low complexity) spans 324–338 (ATRALPPGPPAGATG). 2 stretches are compositionally biased toward polar residues: residues 350–365 (STPT…TSPR) and 400–409 (SRISASQTSV).

Belongs to the protein kinase superfamily. CK1 Ser/Thr protein kinase family. Casein kinase I subfamily. Monomer. Component of the circadian core oscillator, which includes the CRY proteins, CLOCK, or NPAS2, BMAL1 or BMAL2, CSNK1E, and the PER proteins.

It localises to the cytoplasm. The catalysed reaction is L-seryl-[protein] + ATP = O-phospho-L-seryl-[protein] + ADP + H(+). It catalyses the reaction L-threonyl-[protein] + ATP = O-phospho-L-threonyl-[protein] + ADP + H(+). Functionally, casein kinases are operationally defined by their preferential utilization of acidic proteins such as caseins as substrates. Can phosphorylate a large number of proteins. Participates in Wnt signaling. Phosphorylates DVL1. Central component of the circadian clock. May act as a negative regulator of circadian rhythmicity by phosphorylating PER1 and PER2. Retains PER1 in the cytoplasm. The chain is Casein kinase I isoform epsilon (CSNK1E) from Gallus gallus (Chicken).